The chain runs to 246 residues: Orotidine 5'-phosphate decarboxylase (246 aa).

Substrate-binding positions include D22, K44, D71 to T80, T130, R191, Q201, G221, and R222. The active-site Proton donor is K73.

The protein belongs to the OMP decarboxylase family. Type 1 subfamily. Homodimer.

It carries out the reaction orotidine 5'-phosphate + H(+) = UMP + CO2. Its pathway is pyrimidine metabolism; UMP biosynthesis via de novo pathway; UMP from orotate: step 2/2. Catalyzes the decarboxylation of orotidine 5'-monophosphate (OMP) to uridine 5'-monophosphate (UMP). In Neisseria meningitidis serogroup A / serotype 4A (strain DSM 15465 / Z2491), this protein is Orotidine 5'-phosphate decarboxylase.